A 257-amino-acid chain; its full sequence is ATP synthase subunit a (257 aa).

Positions 1–4 (MFIT) are cleaved as a propeptide — removed in mature form. 8 helical membrane-spanning segments follow: residues 27–47 (FSNF…LAII), 58–78 (IVPQ…LNLV), 93–113 (YFPF…LRLI), 122–142 (QLIF…ILGL), 149–169 (VFGL…LVLI), 189–209 (IIAG…FMGL), 214–234 (FIIG…EFGI), and 236–256 (FIQA…SLNL).

Belongs to the ATPase A chain family. In terms of assembly, F-type ATPases have 2 components, CF(1) - the catalytic core - and CF(0) - the membrane proton channel. CF(1) has five subunits: alpha(3), beta(3), gamma(1), delta(1), epsilon(1). CF(0) has three main subunits: a, b and c.

The protein localises to the mitochondrion inner membrane. Its function is as follows. Mitochondrial membrane ATP synthase (F(1)F(0) ATP synthase or Complex V) produces ATP from ADP in the presence of a proton gradient across the membrane which is generated by electron transport complexes of the respiratory chain. F-type ATPases consist of two structural domains, F(1) - containing the extramembraneous catalytic core and F(0) - containing the membrane proton channel, linked together by a central stalk and a peripheral stalk. During catalysis, ATP synthesis in the catalytic domain of F(1) is coupled via a rotary mechanism of the central stalk subunits to proton translocation. Key component of the proton channel; it may play a direct role in the translocation of protons across the membrane. In Schizosaccharomyces pombe (strain 972 / ATCC 24843) (Fission yeast), this protein is ATP synthase subunit a (atp6).